The chain runs to 323 residues: uncharacterized protein (323 aa).

The protein localises to the mitochondrion. This is an uncharacterized protein from Schizosaccharomyces pombe (strain 972 / ATCC 24843) (Fission yeast).